The following is a 381-amino-acid chain: Succinyl-diaminopimelate desuccinylase (381 aa).

His72 contributes to the Zn(2+) binding site. Asp74 is a catalytic residue. Asp105 serves as a coordination point for Zn(2+). Glu139 (proton acceptor) is an active-site residue. 3 residues coordinate Zn(2+): Glu140, Glu168, and His354.

This sequence belongs to the peptidase M20A family. DapE subfamily. Homodimer. Zn(2+) serves as cofactor. It depends on Co(2+) as a cofactor.

The enzyme catalyses N-succinyl-(2S,6S)-2,6-diaminopimelate + H2O = (2S,6S)-2,6-diaminopimelate + succinate. It participates in amino-acid biosynthesis; L-lysine biosynthesis via DAP pathway; LL-2,6-diaminopimelate from (S)-tetrahydrodipicolinate (succinylase route): step 3/3. Its function is as follows. Catalyzes the hydrolysis of N-succinyl-L,L-diaminopimelic acid (SDAP), forming succinate and LL-2,6-diaminopimelate (DAP), an intermediate involved in the bacterial biosynthesis of lysine and meso-diaminopimelic acid, an essential component of bacterial cell walls. The chain is Succinyl-diaminopimelate desuccinylase from Shewanella sp. (strain MR-7).